Reading from the N-terminus, the 493-residue chain is MELKKLLECLTFYNVNGEVENCEITSLEMDSRKITSGSAFVCITGFTVDGHDYVDQAVKNGASAIFTSKPLMKEYGVPIIQVEDTNRALAMLAVKYYDYPTKHFPLIGVTGTNGKTTVTYLLDKIFEYHQKKAGVIGTIQVKIGEETFPIVNTTPNALELQKTFHVMREKDVKQGIMEVSSHALDMGRVYGCDYDIAVFTNLSQDHLDYHQDIQDYLRAKSLLFAQLGNGYDSEKEKYAIINDDDSSSHLLKRSTAQHVITYSCKKEATIMAKDIELTASGIRFKLHSPLGNITIQSRLMGMFNVYNMLAASAAAIASKVPLNVIQQALESIEGVNGRFEPIVEGQNYSVIVDFAHTPDSLENVLQTIKDFAKRNVYVVVGCGGDRDRKKRPLMAEVALNYADHAVFTSDNPRTEDPQAILDDMTAELDANSGSYEVVVDRKEGIAKAIQSAQKDDIVLIAGKGHETYQIIGHTKYDFDDRDVARNAIKQKGE.

A UDP-N-acetyl-alpha-D-muramoyl-L-alanyl-D-glutamate-binding site is contributed by serine 31. 111–117 contributes to the ATP binding site; it reads GTNGKTT. UDP-N-acetyl-alpha-D-muramoyl-L-alanyl-D-glutamate is bound by residues asparagine 152, 153-154, serine 180, and arginine 188; that span reads TT. Position 220 is an N6-carboxylysine (lysine 220). Meso-2,6-diaminopimelate-binding positions include arginine 386, 410-413, glycine 462, and glutamate 466; that span reads DNPR. The short motif at 410 to 413 is the Meso-diaminopimelate recognition motif element; it reads DNPR.

The protein belongs to the MurCDEF family. MurE subfamily. It depends on Mg(2+) as a cofactor. In terms of processing, carboxylation is probably crucial for Mg(2+) binding and, consequently, for the gamma-phosphate positioning of ATP.

It is found in the cytoplasm. It carries out the reaction UDP-N-acetyl-alpha-D-muramoyl-L-alanyl-D-glutamate + meso-2,6-diaminopimelate + ATP = UDP-N-acetyl-alpha-D-muramoyl-L-alanyl-gamma-D-glutamyl-meso-2,6-diaminopimelate + ADP + phosphate + H(+). It participates in cell wall biogenesis; peptidoglycan biosynthesis. In terms of biological role, catalyzes the addition of meso-diaminopimelic acid to the nucleotide precursor UDP-N-acetylmuramoyl-L-alanyl-D-glutamate (UMAG) in the biosynthesis of bacterial cell-wall peptidoglycan. The polypeptide is UDP-N-acetylmuramoyl-L-alanyl-D-glutamate--2,6-diaminopimelate ligase (murE1) (Oceanobacillus iheyensis (strain DSM 14371 / CIP 107618 / JCM 11309 / KCTC 3954 / HTE831)).